The sequence spans 146 residues: Putative pre-16S rRNA nuclease (146 aa).

Belongs to the YqgF nuclease family.

Its subcellular location is the cytoplasm. Could be a nuclease involved in processing of the 5'-end of pre-16S rRNA. This chain is Putative pre-16S rRNA nuclease, found in Pseudomonas syringae pv. syringae (strain B728a).